The primary structure comprises 318 residues: Protein-L-histidine N-pros-methyltransferase (318 aa).

Residues 1–18 (MRLLAGWLCLSLASVWLA) form the signal peptide. Asparagine 35 is a glycosylation site (N-linked (GlcNAc...) asparagine). Residues glutamate 174, asparagine 210, and tyrosine 295 each contribute to the S-adenosyl-L-homocysteine site.

Belongs to the METTL9 family. In terms of tissue distribution, expressed in liver, colon, small intestine, skin, kidney and to a lesser extent in spleen, lung, thymus and stomach. Not detected in fibroblast and endothelial cells.

The protein resides in the endoplasmic reticulum. It is found in the mitochondrion. The catalysed reaction is L-histidyl-[protein] + S-adenosyl-L-methionine = N(pros)-methyl-L-histidyl-[protein] + S-adenosyl-L-homocysteine + H(+). Its function is as follows. Protein-histidine N-methyltransferase that specifically catalyzes 1-methylhistidine (pros-methylhistidine) methylation of target proteins. Specifically methylates the second His of proteins with a His-x-His (HxH) motif (where 'x' is preferably a small amino acid), while exploiting the first one as a recognition signature. Catalyzes methylation of target proteins such as S100A9, NDUFB3, SLC39A5, SLC39A7, ARMC6 and DNAJB12; 1-methylhistidine modification may affect the binding of zinc and other metals to its target proteins. Constitutes the main methyltransferase for the 1-methylhistidine modification in cell. This chain is Protein-L-histidine N-pros-methyltransferase, found in Mus musculus (Mouse).